The sequence spans 422 residues: L-cysteine:1D-myo-inositol 2-amino-2-deoxy-alpha-D-glucopyranoside ligase (422 aa).

Cysteine 43 contacts Zn(2+). Residues 43–46, threonine 58, and 81–83 contribute to the L-cysteinyl-5'-AMP site; these read CGIT and NVT. The 'HIGH' region motif lies at 45-55; it reads ITPYDATHLGH. Over residues 185–200 the composition is skewed to basic and acidic residues; sequence AERGGDPDRPGKRNRL. The segment at 185–221 is disordered; that stretch reads AERGGDPDRPGKRNRLDPMLWRGRRPGEPSWPGPRGV. The 'ERGGDP' region motif lies at 186-191; sequence ERGGDP. Tryptophan 227 is a binding site for L-cysteinyl-5'-AMP. Zn(2+) is bound at residue cysteine 231. Position 249–251 (249–251) interacts with L-cysteinyl-5'-AMP; that stretch reads GSD. Histidine 256 serves as a coordination point for Zn(2+). Position 288 (isoleucine 288) interacts with L-cysteinyl-5'-AMP. Residues 294-298 carry the 'KMSKS' region motif; the sequence is KMSKS.

This sequence belongs to the class-I aminoacyl-tRNA synthetase family. MshC subfamily. Monomer. It depends on Zn(2+) as a cofactor.

The enzyme catalyses 1D-myo-inositol 2-amino-2-deoxy-alpha-D-glucopyranoside + L-cysteine + ATP = 1D-myo-inositol 2-(L-cysteinylamino)-2-deoxy-alpha-D-glucopyranoside + AMP + diphosphate + H(+). Functionally, catalyzes the ATP-dependent condensation of GlcN-Ins and L-cysteine to form L-Cys-GlcN-Ins. This Geodermatophilus obscurus (strain ATCC 25078 / DSM 43160 / JCM 3152 / CCUG 61914 / KCC A-0152 / KCTC 9177 / NBRC 13315 / NRRL B-3577 / G-20) protein is L-cysteine:1D-myo-inositol 2-amino-2-deoxy-alpha-D-glucopyranoside ligase.